Reading from the N-terminus, the 337-residue chain is Biotin synthase (337 aa).

The 230-residue stretch at 52-281 (ADIQRASLLS…RSRVRLSAGR (230 aa)) folds into the Radical SAM core domain. 3 residues coordinate [4Fe-4S] cluster: cysteine 67, cysteine 71, and cysteine 74. Positions 112, 144, 204, and 276 each coordinate [2Fe-2S] cluster.

Belongs to the radical SAM superfamily. Biotin synthase family. In terms of assembly, homodimer. [4Fe-4S] cluster serves as cofactor. [2Fe-2S] cluster is required as a cofactor.

The enzyme catalyses (4R,5S)-dethiobiotin + (sulfur carrier)-SH + 2 reduced [2Fe-2S]-[ferredoxin] + 2 S-adenosyl-L-methionine = (sulfur carrier)-H + biotin + 2 5'-deoxyadenosine + 2 L-methionine + 2 oxidized [2Fe-2S]-[ferredoxin]. Its pathway is cofactor biosynthesis; biotin biosynthesis; biotin from 7,8-diaminononanoate: step 2/2. Catalyzes the conversion of dethiobiotin (DTB) to biotin by the insertion of a sulfur atom into dethiobiotin via a radical-based mechanism. This is Biotin synthase from Methylobacterium radiotolerans (strain ATCC 27329 / DSM 1819 / JCM 2831 / NBRC 15690 / NCIMB 10815 / 0-1).